Here is a 135-residue protein sequence, read N- to C-terminus: UPF0102 protein Aave_0630 (135 aa).

The disordered stretch occupies residues 1–21 (MGILEKKTAGPGGAARKTTTR).

It belongs to the UPF0102 family.

This is UPF0102 protein Aave_0630 from Paracidovorax citrulli (strain AAC00-1) (Acidovorax citrulli).